A 436-amino-acid polypeptide reads, in one-letter code: Septin-7 (436 aa).

Serine 2 bears the N-acetylserine mark. Position 29 is a phosphotyrosine (tyrosine 29). The region spanning 46 to 315 is the Septin-type G domain; that stretch reads RGFEFTLMVV…ENYRSRKLAA (270 aa). An interaction with SEPTIN12 region spans residues 46 to 316; it reads RGFEFTLMVV…NYRSRKLAAV (271 aa). The tract at residues 56–63 is G1 motif; sequence GESGLGKS. 56–63 provides a ligand contact to GTP; it reads GESGLGKS. Phosphoserine is present on serine 76. Residues threonine 89, glycine 115, and 194-202 contribute to the GTP site; that span reads KADTLTPEE. The interval 112-115 is G3 motif; it reads DTPG. The tract at residues 193–196 is G4 motif; the sequence is AKAD. At threonine 227 the chain carries Phosphothreonine. Residues glycine 249 and arginine 264 each coordinate GTP. Residues 331–436 adopt a coiled-coil conformation; the sequence is TKSPLAQMEE…EKNKKKGKIF (106 aa). Residue serine 333 is modified to Phosphoserine. Lysine 372 carries the post-translational modification N6-acetyllysine. Over residues 377-409 the composition is skewed to basic and acidic residues; the sequence is ELQRRHEQMKKNLEAQHKELEEKRRQFEEEKAN. Residues 377 to 436 form a disordered region; it reads ELQRRHEQMKKNLEAQHKELEEKRRQFEEEKANWEAQQRILEQQNSSRTLEKNKKKGKIF. Serine 423 carries the post-translational modification Phosphoserine. Threonine 425 is subject to Phosphothreonine.

This sequence belongs to the TRAFAC class TrmE-Era-EngA-EngB-Septin-like GTPase superfamily. Septin GTPase family. As to quaternary structure, septins polymerize into heterooligomeric protein complexes that form filaments, and associate with cellular membranes, actin filaments and microtubules. GTPase activity is required for filament formation. Filaments are assembled from asymmetrical heterotrimers, composed of SEPTIN2, SEPTIN6 and SEPTIN7 that associate head-to-head to form a hexameric unit. Within the trimer, directly interacts with SEPTIN6, while interaction with SEPTIN2 seems indirect. In the absence of SEPTIN6, forms homodimers. Interacts directly with CENPE and links CENPE to septin filaments composed of SEPTIN2, SEPTIN6 and SEPTIN7. Interacts with SEPTIN8, SEPTIN9 and SEPTIN11. Component of a septin core octameric complex consisting of SEPTIN12, SEPTIN7, SEPTIN6 and SEPTIN2 or SEPTIN4 in the order 12-7-6-2-2-6-7-12 or 12-7-6-4-4-6-7-12 and located in the sperm annulus; the SEPTIN12:SEPTIN7 association is mediated by the respective GTP-binding domains. Interacts with SEPTIN2 and SEPTIN5. Expressed in the cerebral cortex (at protein level).

It localises to the cytoplasm. The protein localises to the chromosome. The protein resides in the centromere. Its subcellular location is the kinetochore. It is found in the cytoskeleton. It localises to the spindle. The protein localises to the cleavage furrow. The protein resides in the midbody. Its subcellular location is the cilium axoneme. It is found in the cell projection. It localises to the cilium. The protein localises to the flagellum. Filament-forming cytoskeletal GTPase. Required for normal organization of the actin cytoskeleton. Required for normal progress through mitosis. Involved in cytokinesis. Required for normal association of CENPE with the kinetochore. Plays a role in ciliogenesis and collective cell movements. Forms a filamentous structure with SEPTIN12, SEPTIN6, SEPTIN2 and probably SEPTIN4 at the sperm annulus which is required for the structural integrity and motility of the sperm tail during postmeiotic differentiation. This chain is Septin-7, found in Mus musculus (Mouse).